Here is a 108-residue protein sequence, read N- to C-terminus: Translation initiation factor 1A (108 aa).

The 75-residue stretch at 11 to 85 (PSRDVPKPEE…NRCDILYKYG (75 aa)) folds into the S1-like domain.

This sequence belongs to the eIF-1A family.

Its function is as follows. Seems to be required for maximal rate of protein biosynthesis. Enhances ribosome dissociation into subunits and stabilizes the binding of the initiator Met-tRNA(I) to 40 S ribosomal subunits. This chain is Translation initiation factor 1A (eIF1A), found in Saccharolobus islandicus (strain Y.N.15.51 / Yellowstone #2) (Sulfolobus islandicus).